A 225-amino-acid chain; its full sequence is ATP phosphoribosyltransferase (225 aa).

The protein belongs to the ATP phosphoribosyltransferase family. Short subfamily. Heteromultimer composed of HisG and HisZ subunits.

The protein localises to the cytoplasm. The enzyme catalyses 1-(5-phospho-beta-D-ribosyl)-ATP + diphosphate = 5-phospho-alpha-D-ribose 1-diphosphate + ATP. It functions in the pathway amino-acid biosynthesis; L-histidine biosynthesis; L-histidine from 5-phospho-alpha-D-ribose 1-diphosphate: step 1/9. Catalyzes the condensation of ATP and 5-phosphoribose 1-diphosphate to form N'-(5'-phosphoribosyl)-ATP (PR-ATP). Has a crucial role in the pathway because the rate of histidine biosynthesis seems to be controlled primarily by regulation of HisG enzymatic activity. This chain is ATP phosphoribosyltransferase, found in Herminiimonas arsenicoxydans.